A 106-amino-acid polypeptide reads, in one-letter code: Large ribosomal subunit protein P1A (106 aa).

N-acetylserine is present on Ser2. A disordered region spans residues 73–106 (GGVAGGEAGEAEAEKEEEEAKEESDDDMGFGLFD). A compositionally biased stretch (acidic residues) spans 81 to 100 (GEAEAEKEEEEAKEESDDDM). Position 96 is a phosphoserine (Ser96).

It belongs to the eukaryotic ribosomal protein P1/P2 family. Component of the large ribosomal subunit (LSU). Mature yeast ribosomes consist of a small (40S) and a large (60S) subunit. The 40S small subunit contains 1 molecule of ribosomal RNA (18S rRNA) and 33 different proteins (encoded by 57 genes). The large 60S subunit contains 3 rRNA molecules (25S, 5.8S and 5S rRNA) and 46 different proteins (encoded by 81 genes). The 5 acidic ribosomal P-proteins form the stalk structure of the 60S subunit. They are organized as a pentameric complex in which uL10/P0 interacts with 2 heterodimers, P1A-P2B and P1B-P2A. Post-translationally, N-terminally acetylated by acetyltransferase NatA.

It localises to the cytoplasm. Its function is as follows. Component of the ribosome, a large ribonucleoprotein complex responsible for the synthesis of proteins in the cell. The small ribosomal subunit (SSU) binds messenger RNAs (mRNAs) and translates the encoded message by selecting cognate aminoacyl-transfer RNA (tRNA) molecules. The large subunit (LSU) contains the ribosomal catalytic site termed the peptidyl transferase center (PTC), which catalyzes the formation of peptide bonds, thereby polymerizing the amino acids delivered by tRNAs into a polypeptide chain. The nascent polypeptides leave the ribosome through a tunnel in the LSU and interact with protein factors that function in enzymatic processing, targeting, and the membrane insertion of nascent chains at the exit of the ribosomal tunnel. This is Large ribosomal subunit protein P1A from Saccharomyces cerevisiae (strain ATCC 204508 / S288c) (Baker's yeast).